Here is a 424-residue protein sequence, read N- to C-terminus: UDP-N-acetylglucosamine 1-carboxyvinyltransferase (424 aa).

A phosphoenolpyruvate-binding site is contributed by 22 to 23 (KN). Arg-98 contributes to the UDP-N-acetyl-alpha-D-glucosamine binding site. The active-site Proton donor is Cys-122. Residue Cys-122 is modified to 2-(S-cysteinyl)pyruvic acid O-phosphothioketal. UDP-N-acetyl-alpha-D-glucosamine is bound by residues 127 to 131 (RPVDQ), Asp-312, and Ile-334.

Belongs to the EPSP synthase family. MurA subfamily.

Its subcellular location is the cytoplasm. It catalyses the reaction phosphoenolpyruvate + UDP-N-acetyl-alpha-D-glucosamine = UDP-N-acetyl-3-O-(1-carboxyvinyl)-alpha-D-glucosamine + phosphate. It participates in cell wall biogenesis; peptidoglycan biosynthesis. In terms of biological role, cell wall formation. Adds enolpyruvyl to UDP-N-acetylglucosamine. In Xanthomonas euvesicatoria pv. vesicatoria (strain 85-10) (Xanthomonas campestris pv. vesicatoria), this protein is UDP-N-acetylglucosamine 1-carboxyvinyltransferase.